The primary structure comprises 532 residues: uncharacterized protein (532 aa).

A run of 6 helical transmembrane segments spans residues 7–26 (HSSY…LGRI), 30–52 (GLSL…GVII), 59–77 (FGLV…PGFF), 87–109 (LILI…KYAF), 116–134 (VVGL…AVAI), and 139–161 (SPLA…ILFV). RCK C-terminal domains lie at 179-262 (LEIE…LIGE) and 263-346 (REEG…LLGN). 6 helical membrane-spanning segments follow: residues 356 to 376 (FFPI…NISF), 386 to 408 (LTGG…PIIW), 421 to 440 (LGLL…NLVA), 445 to 467 (SGLL…AVIV), 474 to 496 (INIL…LAAA), and 506 to 528 (SVAY…QVIS).

The protein belongs to the AAE transporter (TC 2.A.81) family.

It localises to the cell membrane. This is an uncharacterized protein from Bacteroides thetaiotaomicron (strain ATCC 29148 / DSM 2079 / JCM 5827 / CCUG 10774 / NCTC 10582 / VPI-5482 / E50).